We begin with the raw amino-acid sequence, 421 residues long: Serine--tRNA ligase (421 aa).

Residue 227–229 (TSE) coordinates L-serine. Residues 257–259 (RRE) and V273 contribute to the ATP site. E280 contributes to the L-serine binding site. Position 344–347 (344–347 (ELTS)) interacts with ATP. Residue T379 participates in L-serine binding.

Belongs to the class-II aminoacyl-tRNA synthetase family. Type-1 seryl-tRNA synthetase subfamily. Homodimer. The tRNA molecule binds across the dimer.

It is found in the cytoplasm. It catalyses the reaction tRNA(Ser) + L-serine + ATP = L-seryl-tRNA(Ser) + AMP + diphosphate + H(+). It carries out the reaction tRNA(Sec) + L-serine + ATP = L-seryl-tRNA(Sec) + AMP + diphosphate + H(+). It participates in aminoacyl-tRNA biosynthesis; selenocysteinyl-tRNA(Sec) biosynthesis; L-seryl-tRNA(Sec) from L-serine and tRNA(Sec): step 1/1. In terms of biological role, catalyzes the attachment of serine to tRNA(Ser). Is also able to aminoacylate tRNA(Sec) with serine, to form the misacylated tRNA L-seryl-tRNA(Sec), which will be further converted into selenocysteinyl-tRNA(Sec). The sequence is that of Serine--tRNA ligase from Leifsonia xyli subsp. xyli (strain CTCB07).